A 251-amino-acid polypeptide reads, in one-letter code: CDP-diacylglycerol pyrophosphatase (251 aa).

The helical transmembrane segment at 4–24 (AGLLFLVMIVIAVVAAGIGYW) threads the bilayer.

This sequence belongs to the Cdh family.

It is found in the cell inner membrane. It carries out the reaction a CDP-1,2-diacyl-sn-glycerol + H2O = a 1,2-diacyl-sn-glycero-3-phosphate + CMP + 2 H(+). The protein operates within phospholipid metabolism; CDP-diacylglycerol degradation; phosphatidate from CDP-diacylglycerol: step 1/1. In Escherichia coli (strain K12 / MC4100 / BW2952), this protein is CDP-diacylglycerol pyrophosphatase.